The primary structure comprises 675 residues: Probable potassium transport system protein Kup (675 aa).

A run of 12 helical transmembrane segments spans residues 12-32 (LGML…PLYV), 55-75 (VSLI…LVAL), 98-118 (WLIF…TLTP), 143-163 (WLVP…QVLG), 170-190 (SFGP…LLNI), 216-236 (MGIF…ALYS), 249-269 (TWPF…AWML), 296-316 (IAMI…LITG), 345-365 (IYIG…VWLF), 374-394 (AYGL…SQWV), 401-421 (FWSL…LVAS), and 428-448 (GGYL…VWFF).

It belongs to the HAK/KUP transporter (TC 2.A.72) family.

It localises to the cell membrane. It carries out the reaction K(+)(in) + H(+)(in) = K(+)(out) + H(+)(out). Functionally, transport of potassium into the cell. Likely operates as a K(+):H(+) symporter. The chain is Probable potassium transport system protein Kup from Levilactobacillus brevis (strain ATCC 367 / BCRC 12310 / CIP 105137 / JCM 1170 / LMG 11437 / NCIMB 947 / NCTC 947) (Lactobacillus brevis).